The sequence spans 450 residues: Cyclic GMP-AMP phosphodiesterase SMPDL3A (450 aa).

The N-terminal stretch at 1–22 (MARLGALVCCLLAAWHCRPGLG) is a signal peptide. The Zn(2+) site is built by Asp-42 and His-44. A disulfide bond links Cys-59 and Cys-78. Asp-107 contacts Zn(2+). ATP is bound at residue His-111. N-linked (GlcNAc...) asparagine glycosylation is found at Asn-124 and Asn-128. Asn-148 serves as a coordination point for Zn(2+). 2 residues coordinate ATP: Asn-148 and His-149. N-linked (GlcNAc...) asparagine glycosylation is found at Asn-219 and Asn-235. Residues His-249, His-290, and His-292 each coordinate Zn(2+). Residues Asn-353 and Asn-370 are each glycosylated (N-linked (GlcNAc...) asparagine). 2 cysteine pairs are disulfide-bonded: Cys-417-Cys-421 and Cys-427-Cys-440.

Belongs to the acid sphingomyelinase family. As to quaternary structure, monomer. Homodimer; homodimerizes following 2',3'-cGAMP-binding. Requires Zn(2+) as cofactor.

Its subcellular location is the secreted. The catalysed reaction is 2',3'-cGAMP + H2O = 5'-pGpA(2'-5') + H(+). The enzyme catalyses 5'-pGpA(2'-5') + H2O = 5'-GpA(2'-5') + phosphate. It catalyses the reaction a ribonucleoside 5'-triphosphate + H2O = a ribonucleoside 5'-diphosphate + phosphate + H(+). It carries out the reaction ATP + H2O = ADP + phosphate + H(+). Cyclic-nucleotide phosphodiesterase that acts as a negative regulator of innate immunity by mediating degradation of 2',3'-cGAMP, thereby inhibiting the cGAS-STING signaling. Specifically linearizes 2',3'-cGAMP into 2'5'-bond pGpA and further hydrolyzes pGpA to produce GpA. Also has in vitro nucleotide phosphodiesterase activity with nucleoside triphosphates, such as ATP. Has in vitro activity with p-nitrophenyl-TMP. Has lower activity with nucleoside diphosphates, and no activity with nucleoside monophosphates. Has in vitro activity with CDP-choline, giving rise to CMP and phosphocholine. Has in vitro activity with CDP-ethanolamine. Does not have sphingomyelin phosphodiesterase activity. This is Cyclic GMP-AMP phosphodiesterase SMPDL3A (SMPDL3A) from Bos taurus (Bovine).